The following is a 138-amino-acid chain: Small ribosomal subunit protein uS11c (138 aa).

Positions 1–22 are disordered; sequence MAKPIPRIGSQRNRRINSRKNA. Over residues 12–22 the composition is skewed to basic residues; sequence RNRRINSRKNA.

This sequence belongs to the universal ribosomal protein uS11 family. As to quaternary structure, part of the 30S ribosomal subunit.

The protein resides in the plastid. It is found in the chloroplast. This Fagopyrum esculentum subsp. ancestrale (Wild buckwheat) protein is Small ribosomal subunit protein uS11c.